The sequence spans 357 residues: Serine proteinase inhibitor 1 (357 aa).

It belongs to the serpin family. Poxviruses subfamily.

The protein localises to the host cytoplasm. In terms of biological role, this viral protein may be involved in the regulation of the complement cascade. Involved in red pock formation. This Oryctolagus cuniculus (Rabbit) protein is Serine proteinase inhibitor 1 (SPI-1).